The sequence spans 194 residues: Ras-related protein Rab-22A (194 aa).

12–20 serves as a coordination point for GTP; sequence GDTGVGKSS. Residues 34 to 42 carry the Effector region motif; that stretch reads INPTIGASF. Residues 60–64, 118–121, and 148–150 each bind GTP; these read DTAGQ, NKCD, and SAK. The segment at 170–194 is disordered; it reads DANPPSGGKGFKLRRQPSEPQRSCC. Residues Cys-193 and Cys-194 are each lipidated (S-geranylgeranyl cysteine).

It belongs to the small GTPase superfamily. Rab family. Interacts directly with ZFYVE20. Interacts (in its GTP-bound form) with RINL and RABGEF1. Binds EEA1.

Its subcellular location is the endosome membrane. The protein localises to the cell membrane. It is found in the early endosome. It localises to the late endosome. The protein resides in the cell projection. Its subcellular location is the ruffle. The protein localises to the cytoplasmic vesicle. It is found in the phagosome. It localises to the phagosome membrane. Functionally, plays a role in endocytosis and intracellular protein transport. Mediates trafficking of TF from early endosomes to recycling endosomes. Required for NGF-mediated endocytosis of NTRK1, and subsequent neurite outgrowth. Binds GTP and GDP and has low GTPase activity. Alternates between a GTP-bound active form and a GDP-bound inactive form. The sequence is that of Ras-related protein Rab-22A (RAB22A) from Canis lupus familiaris (Dog).